The sequence spans 482 residues: tRNA sulfurtransferase (482 aa).

The 105-residue stretch at L61–R165 folds into the THUMP domain. Residues L183 to I184, K265, G287, and Q296 each bind ATP. Cysteines 344 and 456 form a disulfide. Positions F404–P482 constitute a Rhodanese domain. The active-site Cysteine persulfide intermediate is C456.

This sequence belongs to the ThiI family.

The protein resides in the cytoplasm. The enzyme catalyses [ThiI sulfur-carrier protein]-S-sulfanyl-L-cysteine + a uridine in tRNA + 2 reduced [2Fe-2S]-[ferredoxin] + ATP + H(+) = [ThiI sulfur-carrier protein]-L-cysteine + a 4-thiouridine in tRNA + 2 oxidized [2Fe-2S]-[ferredoxin] + AMP + diphosphate. The catalysed reaction is [ThiS sulfur-carrier protein]-C-terminal Gly-Gly-AMP + S-sulfanyl-L-cysteinyl-[cysteine desulfurase] + AH2 = [ThiS sulfur-carrier protein]-C-terminal-Gly-aminoethanethioate + L-cysteinyl-[cysteine desulfurase] + A + AMP + 2 H(+). It functions in the pathway cofactor biosynthesis; thiamine diphosphate biosynthesis. Catalyzes the ATP-dependent transfer of a sulfur to tRNA to produce 4-thiouridine in position 8 of tRNAs, which functions as a near-UV photosensor. Also catalyzes the transfer of sulfur to the sulfur carrier protein ThiS, forming ThiS-thiocarboxylate. This is a step in the synthesis of thiazole, in the thiamine biosynthesis pathway. The sulfur is donated as persulfide by IscS. The polypeptide is tRNA sulfurtransferase (Shigella flexneri).